A 94-amino-acid chain; its full sequence is Small ribosomal subunit protein uS19 (94 aa).

The protein belongs to the universal ribosomal protein uS19 family.

Its function is as follows. Protein S19 forms a complex with S13 that binds strongly to the 16S ribosomal RNA. This chain is Small ribosomal subunit protein uS19, found in Halothermothrix orenii (strain H 168 / OCM 544 / DSM 9562).